Here is a 126-residue protein sequence, read N- to C-terminus: Histone H2B type 1-H (126 aa).

The segment covering 1–12 (MPDPAKSAPAPK) has biased composition (low complexity). Residues 1–36 (MPDPAKSAPAPKKGSKKAVTKAQKKDGKKRKRSRKE) are disordered. An N-acetylproline modification is found at P2. An N6-(2-hydroxyisobutyryl)lysine; alternate modification is found at K6. K6 is modified (N6-(beta-hydroxybutyryl)lysine; alternate). K6 carries the N6-acetyllysine; alternate modification. K6 is subject to N6-butyryllysine; alternate. The residue at position 6 (K6) is an N6-crotonyllysine; alternate. N6-lactoyllysine; alternate is present on K6. Residue K6 forms a Glycyl lysine isopeptide (Lys-Gly) (interchain with G-Cter in SUMO2); alternate linkage. ADP-ribosylserine is present on S7. K12 carries the N6-(beta-hydroxybutyryl)lysine; alternate modification. 2 positions are modified to N6-acetyllysine; alternate: K12 and K13. Residues K12 and K13 each carry the N6-crotonyllysine; alternate modification. K12 bears the N6-lactoyllysine; alternate mark. Residue K13 is modified to N6-(2-hydroxyisobutyryl)lysine; alternate. S15 carries the post-translational modification Phosphoserine; by STK4/MST1. Residues K16, K17, K21, and K24 each carry the N6-acetyllysine; alternate modification. 4 positions are modified to N6-crotonyllysine; alternate: K16, K17, K21, and K24. An N6-lactoyllysine; alternate mark is found at K16, K17, K21, and K24. N6-(beta-hydroxybutyryl)lysine; alternate occurs at positions 17 and 21. K17 is subject to N6-glutaryllysine; alternate. K21 and K24 each carry N6-(2-hydroxyisobutyryl)lysine; alternate. Residue K21 is modified to N6-butyryllysine; alternate. Residue K21 forms a Glycyl lysine isopeptide (Lys-Gly) (interchain with G-Cter in SUMO2); alternate linkage. The residue at position 25 (K25) is an N6-(2-hydroxyisobutyryl)lysine. Position 35 is an N6-(2-hydroxyisobutyryl)lysine; alternate (K35). K35 carries the N6-(beta-hydroxybutyryl)lysine; alternate modification. K35 is subject to N6-crotonyllysine; alternate. Position 35 is an N6-glutaryllysine; alternate (K35). K35 bears the N6-succinyllysine; alternate mark. A Glycyl lysine isopeptide (Lys-Gly) (interchain with G-Cter in ubiquitin); alternate cross-link involves residue K35. At E36 the chain carries PolyADP-ribosyl glutamic acid. Residue S37 is modified to Phosphoserine; by AMPK. N6-(2-hydroxyisobutyryl)lysine; alternate is present on residues K44, K47, and K58. The residue at position 44 (K44) is an N6-lactoyllysine; alternate. K44 and K47 each carry N6-glutaryllysine; alternate. K47 is subject to N6-methyllysine; alternate. At K58 the chain carries N6,N6-dimethyllysine; alternate. A Dimethylated arginine modification is found at R80. K86 bears the N6-(2-hydroxyisobutyryl)lysine; alternate mark. K86 bears the N6-(beta-hydroxybutyryl)lysine; alternate mark. K86 is subject to N6-acetyllysine; alternate. At K86 the chain carries N6-lactoyllysine; alternate. K86 bears the N6,N6,N6-trimethyllysine; alternate mark. Residues R87 and R93 each carry the omega-N-methylarginine modification. An N6-(2-hydroxyisobutyryl)lysine; alternate modification is found at K109. An N6-lactoyllysine; alternate modification is found at K109. An N6-glutaryllysine; alternate modification is found at K109. K109 carries the N6-methyllysine; alternate modification. S113 carries O-linked (GlcNAc) serine glycosylation. T116 is modified (phosphothreonine). N6-(2-hydroxyisobutyryl)lysine; alternate occurs at positions 117 and 121. An N6-(beta-hydroxybutyryl)lysine; alternate mark is found at K117 and K121. An N6-lactoyllysine; alternate mark is found at K117 and K121. K117 and K121 each carry N6-glutaryllysine; alternate. An N6-succinyllysine; alternate mark is found at K117 and K121. The residue at position 117 (K117) is an N6-malonyllysine; alternate. K117 is subject to N6-methylated lysine; alternate. K121 is covalently cross-linked (Glycyl lysine isopeptide (Lys-Gly) (interchain with G-Cter in ubiquitin); alternate).

This sequence belongs to the histone H2B family. As to quaternary structure, the nucleosome is a histone octamer containing two molecules each of H2A, H2B, H3 and H4 assembled in one H3-H4 heterotetramer and two H2A-H2B heterodimers. The octamer wraps approximately 147 bp of DNA. Found in a complex with PPAR9; DTX3L AND STAT1; the interaction is likely to induce DTX3L-mediated ubiquitination of H2BC9/H2BJ. Monoubiquitination at Lys-35 (H2BK34Ub) by the MSL1/MSL2 dimer is required for histone H3 'Lys-4' (H3K4me) and 'Lys-79' (H3K79me) methylation and transcription activation at specific gene loci, such as HOXA9 and MEIS1 loci. Similarly, monoubiquitination at Lys-121 (H2BK120Ub) by the RNF20/40 complex gives a specific tag for epigenetic transcriptional activation and is also prerequisite for histone H3 'Lys-4' and 'Lys-79' methylation. It also functions cooperatively with the FACT dimer to stimulate elongation by RNA polymerase II. H2BK120Ub also acts as a regulator of mRNA splicing: deubiquitination by USP49 is required for efficient cotranscriptional splicing of a large set of exons. Monoubiquitinated by DTX3L upon encephalomyocarditis virus (EMCV)-mediated infection. Post-translationally, phosphorylation at Ser-37 (H2BS36ph) by AMPK in response to stress promotes transcription. Phosphorylated on Ser-15 (H2BS14ph) by STK4/MST1 during apoptosis; which facilitates apoptotic chromatin condensation. Also phosphorylated on Ser-15 in response to DNA double strand breaks (DSBs), and in correlation with somatic hypermutation and immunoglobulin class-switch recombination. In terms of processing, glcNAcylation at Ser-113 promotes monoubiquitination of Lys-121. It fluctuates in response to extracellular glucose, and associates with transcribed genes. ADP-ribosylated by PARP1 or PARP2 on Ser-7 (H2BS6ADPr) in response to DNA damage. H2BS6ADPr promotes recruitment of CHD1L. Poly ADP-ribosylation on Glu-36 (H2BE35ADPr) by PARP1 regulates adipogenesis: it inhibits phosphorylation at Ser-37 (H2BS36ph), thereby blocking expression of pro-adipogenetic genes. Post-translationally, crotonylation (Kcr) is specifically present in male germ cells and marks testis-specific genes in post-meiotic cells, including X-linked genes that escape sex chromosome inactivation in haploid cells. Crotonylation marks active promoters and enhancers and confers resistance to transcriptional repressors. It is also associated with post-meiotically activated genes on autosomes. In terms of processing, lactylated in macrophages by EP300/P300 by using lactoyl-CoA directly derived from endogenous or exogenous lactate, leading to stimulates gene transcription.

It is found in the nucleus. The protein resides in the chromosome. Core component of nucleosome. Nucleosomes wrap and compact DNA into chromatin, limiting DNA accessibility to the cellular machineries which require DNA as a template. Histones thereby play a central role in transcription regulation, DNA repair, DNA replication and chromosomal stability. DNA accessibility is regulated via a complex set of post-translational modifications of histones, also called histone code, and nucleosome remodeling. This Homo sapiens (Human) protein is Histone H2B type 1-H.